The sequence spans 346 residues: Biotin synthase (346 aa).

The region spanning 38–256 is the Radical SAM core domain; that stretch reads RQVQVSTLLS…IAVARIMMPT (219 aa). [4Fe-4S] cluster is bound by residues Cys53, Cys57, and Cys60. Residues Cys97, Cys128, Cys188, and Arg260 each contribute to the [2Fe-2S] cluster site.

This sequence belongs to the radical SAM superfamily. Biotin synthase family. As to quaternary structure, homodimer. The cofactor is [4Fe-4S] cluster. It depends on [2Fe-2S] cluster as a cofactor.

The catalysed reaction is (4R,5S)-dethiobiotin + (sulfur carrier)-SH + 2 reduced [2Fe-2S]-[ferredoxin] + 2 S-adenosyl-L-methionine = (sulfur carrier)-H + biotin + 2 5'-deoxyadenosine + 2 L-methionine + 2 oxidized [2Fe-2S]-[ferredoxin]. Its pathway is cofactor biosynthesis; biotin biosynthesis; biotin from 7,8-diaminononanoate: step 2/2. In terms of biological role, catalyzes the conversion of dethiobiotin (DTB) to biotin by the insertion of a sulfur atom into dethiobiotin via a radical-based mechanism. In Escherichia coli O6:H1 (strain CFT073 / ATCC 700928 / UPEC), this protein is Biotin synthase.